The following is a 618-amino-acid chain: Glucose starvation modulator protein 1 (618 aa).

The segment at residues 20 to 48 (CEFCHTKHIQCDVGRPCQNCLKRNIGKFC) is a DNA-binding region (zn(2)-C6 fungal-type). Positions 325–352 (ANANTHPSHNAKLESECDSSSHSDADLE) are disordered. The segment covering 335–352 (AKLESECDSSSHSDADLE) has biased composition (basic and acidic residues). Positions 466-538 (LLDLENMAKL…QIFNELLAFG (73 aa)) constitute a PAS domain.

Belongs to the ERT1/acuK family.

The protein resides in the nucleus. Its function is as follows. Transcription factor which regulates nonfermentable carbon utilization. Binds specifically to 5'-CGGN(8)CGG-3' and 5'-CGGN(9)CGG-3' sequences in the promoter region. In Saccharomyces cerevisiae (strain ATCC 204508 / S288c) (Baker's yeast), this protein is Glucose starvation modulator protein 1 (GSM1).